We begin with the raw amino-acid sequence, 144 residues long: Endoribonuclease YbeY (144 aa).

Histidine 108, histidine 112, and histidine 118 together coordinate Zn(2+).

This sequence belongs to the endoribonuclease YbeY family. It depends on Zn(2+) as a cofactor.

The protein resides in the cytoplasm. In terms of biological role, single strand-specific metallo-endoribonuclease involved in late-stage 70S ribosome quality control and in maturation of the 3' terminus of the 16S rRNA. This is Endoribonuclease YbeY from Phytoplasma australiense.